The chain runs to 167 residues: ATP synthase subunit b (167 aa).

The helical transmembrane segment at 8 to 28 (AEAEFWVGAGLLIFLGIVFFG) threads the bilayer.

The protein belongs to the ATPase B chain family. In terms of assembly, F-type ATPases have 2 components, F(1) - the catalytic core - and F(0) - the membrane proton channel. F(1) has five subunits: alpha(3), beta(3), gamma(1), delta(1), epsilon(1). F(0) has three main subunits: a(1), b(2) and c(10-14). The alpha and beta chains form an alternating ring which encloses part of the gamma chain. F(1) is attached to F(0) by a central stalk formed by the gamma and epsilon chains, while a peripheral stalk is formed by the delta and b chains.

Its subcellular location is the cell inner membrane. Functionally, f(1)F(0) ATP synthase produces ATP from ADP in the presence of a proton or sodium gradient. F-type ATPases consist of two structural domains, F(1) containing the extramembraneous catalytic core and F(0) containing the membrane proton channel, linked together by a central stalk and a peripheral stalk. During catalysis, ATP synthesis in the catalytic domain of F(1) is coupled via a rotary mechanism of the central stalk subunits to proton translocation. In terms of biological role, component of the F(0) channel, it forms part of the peripheral stalk, linking F(1) to F(0). The sequence is that of ATP synthase subunit b from Phenylobacterium zucineum (strain HLK1).